The chain runs to 138 residues: Small ribosomal subunit protein uS11c (138 aa).

Residues 1–24 (MTKPIPRIGSRKNGRISSRKNGRR) form a disordered region. The span at 9–24 (GSRKNGRISSRKNGRR) shows a compositional bias: basic residues.

This sequence belongs to the universal ribosomal protein uS11 family. As to quaternary structure, part of the 30S ribosomal subunit.

Its subcellular location is the plastid. The protein localises to the chloroplast. This chain is Small ribosomal subunit protein uS11c, found in Chloranthus spicatus (Chulantree).